The sequence spans 728 residues: Catalase-peroxidase (728 aa).

Residues 91-218 constitute a cross-link (tryptophyl-tyrosyl-methioninium (Trp-Tyr) (with M-244)); sequence WHSAGTYRTA…LAAVQMGLIY (128 aa). H92 acts as the Proton acceptor in catalysis. The segment at residues 218–244 is a cross-link (tryptophyl-tyrosyl-methioninium (Tyr-Met) (with W-91)); it reads YVNPEGPDGNPDPVAAARDIRDTFARM. H259 contributes to the heme b binding site.

This sequence belongs to the peroxidase family. Peroxidase/catalase subfamily. Homodimer or homotetramer. It depends on heme b as a cofactor. Formation of the three residue Trp-Tyr-Met cross-link is important for the catalase, but not the peroxidase activity of the enzyme.

The enzyme catalyses H2O2 + AH2 = A + 2 H2O. The catalysed reaction is 2 H2O2 = O2 + 2 H2O. Bifunctional enzyme with both catalase and broad-spectrum peroxidase activity. This Burkholderia pseudomallei (strain 1710b) protein is Catalase-peroxidase.